A 207-amino-acid polypeptide reads, in one-letter code: Imidazole glycerol phosphate synthase subunit HisH (207 aa).

The 207-residue stretch at 1 to 207 folds into the Glutamine amidotransferase type-1 domain; sequence MIAIVDYNMG…ENFTKYRNLK (207 aa). The active-site Nucleophile is C79. Active-site residues include H185 and E187.

As to quaternary structure, heterodimer of HisH and HisF.

It localises to the cytoplasm. The catalysed reaction is 5-[(5-phospho-1-deoxy-D-ribulos-1-ylimino)methylamino]-1-(5-phospho-beta-D-ribosyl)imidazole-4-carboxamide + L-glutamine = D-erythro-1-(imidazol-4-yl)glycerol 3-phosphate + 5-amino-1-(5-phospho-beta-D-ribosyl)imidazole-4-carboxamide + L-glutamate + H(+). The enzyme catalyses L-glutamine + H2O = L-glutamate + NH4(+). It functions in the pathway amino-acid biosynthesis; L-histidine biosynthesis; L-histidine from 5-phospho-alpha-D-ribose 1-diphosphate: step 5/9. In terms of biological role, IGPS catalyzes the conversion of PRFAR and glutamine to IGP, AICAR and glutamate. The HisH subunit catalyzes the hydrolysis of glutamine to glutamate and ammonia as part of the synthesis of IGP and AICAR. The resulting ammonia molecule is channeled to the active site of HisF. The sequence is that of Imidazole glycerol phosphate synthase subunit HisH from Sulfurimonas denitrificans (strain ATCC 33889 / DSM 1251) (Thiomicrospira denitrificans (strain ATCC 33889 / DSM 1251)).